A 334-amino-acid polypeptide reads, in one-letter code: Nucleoid-associated protein YpsIP31758_2721 (334 aa).

Belongs to the YejK family.

It is found in the cytoplasm. The protein localises to the nucleoid. The chain is Nucleoid-associated protein YpsIP31758_2721 from Yersinia pseudotuberculosis serotype O:1b (strain IP 31758).